Consider the following 449-residue polypeptide: N-succinylarginine dihydrolase (449 aa).

Residues Gly19–Ser28, Asn110, and His137–Arg138 each bind substrate. Residues Tyr23–Arg43 are disordered. Residues Ala27–Asn37 show a composition bias toward low complexity. Residue Glu174 is part of the active site. A substrate-binding site is contributed by Arg214. The active site involves His250. The substrate site is built by Asp252 and Asn365. Cys371 acts as the Nucleophile in catalysis.

The protein belongs to the succinylarginine dihydrolase family. Homodimer.

It catalyses the reaction N(2)-succinyl-L-arginine + 2 H2O + 2 H(+) = N(2)-succinyl-L-ornithine + 2 NH4(+) + CO2. Its pathway is amino-acid degradation; L-arginine degradation via AST pathway; L-glutamate and succinate from L-arginine: step 2/5. Catalyzes the hydrolysis of N(2)-succinylarginine into N(2)-succinylornithine, ammonia and CO(2). The sequence is that of N-succinylarginine dihydrolase from Pseudomonas putida (strain ATCC 700007 / DSM 6899 / JCM 31910 / BCRC 17059 / LMG 24140 / F1).